The primary structure comprises 382 residues: Glutamyl-tRNA reductase (382 aa).

Residues 38-41, Ser85, 90-92, and Gln96 contribute to the substrate site; these read TCNR and ENQ. Cys39 acts as the Nucleophile in catalysis. 164-169 serves as a coordination point for NADP(+); it reads GAGEIG.

The protein belongs to the glutamyl-tRNA reductase family. As to quaternary structure, homodimer.

The catalysed reaction is (S)-4-amino-5-oxopentanoate + tRNA(Glu) + NADP(+) = L-glutamyl-tRNA(Glu) + NADPH + H(+). The protein operates within porphyrin-containing compound metabolism; protoporphyrin-IX biosynthesis; 5-aminolevulinate from L-glutamyl-tRNA(Glu): step 1/2. Its function is as follows. Catalyzes the NADPH-dependent reduction of glutamyl-tRNA(Glu) to glutamate 1-semialdehyde (GSA). The sequence is that of Glutamyl-tRNA reductase from Methanococcus maripaludis (strain C7 / ATCC BAA-1331).